A 193-amino-acid polypeptide reads, in one-letter code: dTTP/UTP pyrophosphatase (193 aa).

The Proton acceptor role is filled by Asp-71.

The protein belongs to the Maf family. YhdE subfamily. It depends on a divalent metal cation as a cofactor.

It localises to the cytoplasm. It carries out the reaction dTTP + H2O = dTMP + diphosphate + H(+). The enzyme catalyses UTP + H2O = UMP + diphosphate + H(+). Functionally, nucleoside triphosphate pyrophosphatase that hydrolyzes dTTP and UTP. May have a dual role in cell division arrest and in preventing the incorporation of modified nucleotides into cellular nucleic acids. This Citrifermentans bemidjiense (strain ATCC BAA-1014 / DSM 16622 / JCM 12645 / Bem) (Geobacter bemidjiensis) protein is dTTP/UTP pyrophosphatase.